A 426-amino-acid chain; its full sequence is Enolase (426 aa).

Residue Q163 participates in (2R)-2-phosphoglycerate binding. The active-site Proton donor is E205. The Mg(2+) site is built by D242, E285, and D312. (2R)-2-phosphoglycerate is bound by residues K337, R366, S367, and K388. Residue K337 is the Proton acceptor of the active site.

This sequence belongs to the enolase family. Mg(2+) serves as cofactor.

It localises to the cytoplasm. The protein resides in the secreted. Its subcellular location is the cell surface. The catalysed reaction is (2R)-2-phosphoglycerate = phosphoenolpyruvate + H2O. It functions in the pathway carbohydrate degradation; glycolysis; pyruvate from D-glyceraldehyde 3-phosphate: step 4/5. Functionally, catalyzes the reversible conversion of 2-phosphoglycerate (2-PG) into phosphoenolpyruvate (PEP). It is essential for the degradation of carbohydrates via glycolysis. The chain is Enolase from Nitrobacter winogradskyi (strain ATCC 25391 / DSM 10237 / CIP 104748 / NCIMB 11846 / Nb-255).